A 258-amino-acid polypeptide reads, in one-letter code: Thrombin-like enzyme CPI-enzyme 2 (258 aa).

A signal peptide spans 1–18 (MVLIRVLANLLILQLSYA). Residues 19–24 (QKSSEL) constitute a propeptide that is removed on maturation. The Peptidase S1 domain maps to 25–249 (VIGGDECNIN…YTDWIENIIA (225 aa)). 6 cysteine pairs are disulfide-bonded: Cys-31-Cys-163, Cys-50-Cys-66, Cys-98-Cys-256, Cys-142-Cys-210, Cys-174-Cys-189, and Cys-200-Cys-225. N-linked (GlcNAc...) asparagine glycosylation occurs at Asn-44. The active-site Charge relay system is the His-65. N-linked (GlcNAc...) asparagine glycosylation is found at Asn-79 and Asn-103. Asp-110 (charge relay system) is an active-site residue. N-linked (GlcNAc...) asparagine glycosylation occurs at Asn-121. Ser-204 functions as the Charge relay system in the catalytic mechanism.

It belongs to the peptidase S1 family. Snake venom subfamily. In terms of assembly, monomer. Post-translationally, N-glycosylated. In terms of tissue distribution, expressed by the venom gland.

Its subcellular location is the secreted. Its function is as follows. Thrombin-like snake venom serine protease that cleaves fibrinogen beta (FGB) releasing fibrinopeptide B. Promotes capillary permeability-increasing activity through the release of peptides from the beta-chain of fibrinogen. The sequence is that of Thrombin-like enzyme CPI-enzyme 2 from Gloydius ussuriensis (Ussuri mamushi).